The primary structure comprises 358 residues: Cytoplasmic tRNA 2-thiolation protein 1 (358 aa).

Belongs to the TtcA family. CTU1/NCS6/ATPBD3 subfamily.

The protein localises to the cytoplasm. It functions in the pathway tRNA modification; 5-methoxycarbonylmethyl-2-thiouridine-tRNA biosynthesis. Plays a central role in 2-thiolation of mcm(5)S(2)U at tRNA wobble positions of tRNA(Lys), tRNA(Glu) and tRNA(Gln). Directly binds tRNAs and probably acts by catalyzing adenylation of tRNAs, an intermediate required for 2-thiolation. It is unclear whether it acts as a sulfurtransferase that transfers sulfur from thiocarboxylated URM1 onto the uridine of tRNAs at wobble position. Prior mcm(5) tRNA modification by the elongator complex is required for 2-thiolation. May also be involved in protein urmylation. The chain is Cytoplasmic tRNA 2-thiolation protein 1 from Candida glabrata (strain ATCC 2001 / BCRC 20586 / JCM 3761 / NBRC 0622 / NRRL Y-65 / CBS 138) (Yeast).